A 349-amino-acid chain; its full sequence is GTPase Obg (349 aa).

One can recognise an Obg domain in the interval 1–159 (MKFLDEAKVY…RWIWLRLKLI (159 aa)). The OBG-type G domain maps to 160–327 (ADAGLVGLPN…ALRALVEVIG (168 aa)). Residues 166–173 (GLPNAGKS), 191–195 (FTTLH), 212–215 (DIPG), 279–282 (NKID), and 308–310 (SGV) each bind GTP. The Mg(2+) site is built by serine 173 and threonine 193.

The protein belongs to the TRAFAC class OBG-HflX-like GTPase superfamily. OBG GTPase family. As to quaternary structure, monomer. The cofactor is Mg(2+).

Its subcellular location is the cytoplasm. Its function is as follows. An essential GTPase which binds GTP, GDP and possibly (p)ppGpp with moderate affinity, with high nucleotide exchange rates and a fairly low GTP hydrolysis rate. Plays a role in control of the cell cycle, stress response, ribosome biogenesis and in those bacteria that undergo differentiation, in morphogenesis control. The polypeptide is GTPase Obg (Rhodopseudomonas palustris (strain BisB18)).